The following is a 2504-amino-acid chain: MEEVVIAGMSGKLPESENLQEFWANLIGGVDMVTDDDRRWKAGLYGLPKRSGKLKDLSKFDASFFGVHPKQAHTMDPQLRLLLEVSYEAIVDGGINPASLRGTNTGVWVGVSGSEASEALSRDPETLLGYSMVGCQRAMMANRLSFFFDFKGPSIALDTACSSSLLALQNAYQAIRSGECPAALVGGINLLLKPNTSVQFMKLGMLSPDGTCRSFDDSGSGYCRSEAVVAVLLTKKSLARRVYATILNAGTNTDGSKEQGVTFPSGEVQEQLICSLYQPAGLAPESLEYIEAHGTGTKVGDPQELNGITRSLCAFRQAPLLIGSTKSNMGHPEPASGLAALTKVLLSLEHGVWAPNLHFHNPNPEIPALLDGRLQVVDRPLPVRGGNVGINSFGFGGSNVHVILQPNTRQAPAPTAHAALPHLLHASGRTLEAVQDLLEQGRQHSQDLAFVSMLNDIAATPTAAMPFRGYTVLGVEGRVQEVQQVSTNKRPLWFICSGMGTQWRGMGLSLMRLDSFRESILRSDEAVKPLGVKVSDLLLSTDERTFDDIVHAFVSLTAIQIALIDLLTSVGLKPDGIIGHSLGEVACGYADGCLSQREAVLAAYWRGQCIKDAHLPPGSMAAVGLSWEECKQRCPAGVVPACHNSEDTVTISGPQAAVNEFVEQLKQEGVFAKEVRTGGLAFHSYFMEGIAPTLLQALKKVIREPRPRSARWLSTSIPEAQWQSSLARTSSAEYNVNNLVSPVLFQEALWHIPEHAVVLEIAPHALLQAVLKRGVKSSCTIIPLMKRDHKDNLEFFLTNLGKVHLTGINVNPNALFPPVEFPAPRGTPLISPHIKWDHSQTWDVPVAEDFPNGSSSSSATVYSIDASPESPDHYLVDHCIDGRVIFPGTGYLCLVWKTLARSLGLSLEETPVVFENVSFHQATILPKTGTVALEVRLLEASHAFEVSDTGNLIVSGKVYLWEDPNSKLFDHPEVPTPPESASVSRLTQGEVYKELRLRGYDYGPQFQGICEATLEGEQGKLLWKDNWVTFMDTMLQVSILGSSQQSLQLPTRVTAIYIDPATHRQKVYRLKEDTQVADVTTSRCLGITVSGGIHISRLQTTATSRRQQEQLVPTLEKFVFTPHMEAECLSESTALQKELQLCKGLARALQTKATQQGLKAAMLGQEDPPQHGLPRLLAAACQLQLNGNLQLELGEALAQERLLLPEDPLISGLLNSQALKACVDTALENLSTLKMKVAEVLAGEGHLYSRIPALLNTQPMLQLEYTATDRHPQALKDVQTKLQQHDVAQGQWNPSDPAPSSLGALDLLVCNCALATLGDPALALDNMVAALKEGGFLLVHTVLKGHALGETLACLPSEVQPAPSLLSQEEWESLFSRKALHLVGLKRSFYGTALFLCRRAIPQEKPIFLSVEDTSFQWVDSLKSTLATSSSQPVWLTAMDCPTSGVVGLVNCLRKEPGGHRIRCILLSNLSNTSHAPKLDPGSPELQQVLKHDLVMNVYRDGAWGAFRHFQLEQDKPKEQTAHAFVNVLTRGDLASIRWVSSPLKHTQPSSSGAQLCTVYYASLNFRDIMLATGKLSPDAIPGKWASRDCMLGMEFSGRDRCGRRVMGLVPAEGLATSVLLSSDFLWDVPSSWTLEEAASVPVVYTTAYYSLVVRGRIQRGETVLIHSGSGGVGQAAISIALSLGCRVFTTVGSAEKRAYLQARFPQLDDTSFANSRDTSFEQHVLLHTGGKGVDLVLNSLAEEKLQASVRCLAQHGRFLEIGKFDLSNNHPLGMAIFLKNVTFHGILLDALFEEANDSWREVAALLKAGIRDGVVKPLKCTVFPKAQVEDAFRYMAQGKHIGKVLVQVREEEPEAVLPGAQPTLISAISKTFCPAHKSYIITGGLGGFGLELARWLVLRGAQRLVLTSRSGIRTGYQAKHIREWRRQGIQVLVSTSNVSSLEGARALIAEATKLGPVGGVFNLAMVLRDAMLENQTPELFQDVNKPKYNGTLNLDRATREACPELDYFVAFSSVSCGRGNAGQTNYGFANSTMERICEQRRHDGLPGLAVQWGAIGDVGIVLEAMGTNDTVIGGTLPQRISSCMEVLDLFLNQPHAVLSSFVLAEKKAVAHGDGDTQRDLVKAVAHILGIRDLAGINLDSTLADLGLDSLMGVEVRQILEREHDLVLPMREVRQLTLRKLQEMSSKTDSATDTTAPKSRSDTSLKQNQLNLSTLLVNPEGPTLTQLNSVQSSERPLFLVHPIEGSTTVFHSLAAKLSVPTYGLQCTQAAPLDSIPNLAAYYIDCIKQVQPEGPYRIAGYSFGACVAFEMCSQLQAQQGPAPTHNNLFLFDGSHTYVLAYTQSYRAKMTPGCEAEAEAEALCFFIKQFLDVEHSKVLEALLPLKSLEDRVAASVDLITKSHHSLDRRELSFAAVSFYHKLRAADQYKPKAKYHGNVTLLRAKTGGTYGEDLGADYNLSQVCDGKVSVHIIEGDHRTLLEGSGLESIINIIHSSLAEPRVSVREG.

Position 1 is an N-acetylmethionine (Met-1). Positions 1–406 (MEEVVIAGMS…GSNVHVILQP (406 aa)) constitute a Ketosynthase family 3 (KS3) domain. At Lys-59 the chain carries N6-acetyllysine. Phosphoserine is present on Ser-63. Lys-70 bears the N6-acetyllysine mark. Cys-161 acts as the For beta-ketoacyl synthase activity in catalysis. At Ser-207 the chain carries Phosphoserine. Residue His-293 is the For beta-ketoacyl synthase activity of the active site. At Lys-298 the chain carries N6-acetyllysine. Residue His-331 is the For beta-ketoacyl synthase activity of the active site. Residues 429–817 (RTLEAVQDLL…INVNPNALFP (389 aa)) form an acyl and malonyl transferases region. The residue at position 528 (Lys-528) is an N6-acetyllysine. Ser-581 functions as the For malonyltransferase activity in the catalytic mechanism. An acyl-CoA is bound by residues 647–648 (DT) and Phe-671. Position 673 is an N6-acetyllysine (Lys-673). Ser-725 is modified (phosphoserine). Arg-773 contacts an acyl-CoA. Lys-790 is subject to N6-acetyllysine. Residues 844-967 (VPVAEDFPNG…VYLWEDPNSK (124 aa)) are N-terminal hotdog fold. One can recognise a PKS/mFAS DH domain in the interval 844–1104 (VPVAEDFPNG…ISRLQTTATS (261 aa)). Catalysis depends on His-878, which acts as the Proton acceptor; for dehydratase activity. The segment at 982–1104 (SVSRLTQGEV…ISRLQTTATS (123 aa)) is C-terminal hotdog fold. Lys-993 is modified (N6-acetyllysine). The Proton donor; for dehydratase activity role is filled by Asp-1032. Lys-1071 and Lys-1276 each carry N6-acetyllysine. The residue at position 1464 (Cys-1464) is an S-nitrosocysteine. Residues Ser-1577 and Ser-1587 each carry the phosphoserine modification. The tract at residues 1628–1856 (DVPSSWTLEE…VQVREEEPEA (229 aa)) is enoyl reductase. 1664-1681 (VLIHSGSGGVGQAAISIA) provides a ligand contact to NADP(+). An N6-(pyridoxal phosphate)lysine; alternate modification is found at Lys-1697. An N6-acetyllysine; alternate modification is found at Lys-1697. 2 positions are modified to N6-acetyllysine: Lys-1764 and Lys-1840. A beta-ketoacyl reductase region spans residues 1857–2111 (VLPGAQPTLI…FVLAEKKAVA (255 aa)). NADP(+) is bound at residue 1879-1894 (SYIITGGLGGFGLELA). Position 1988 is an N6-acetyllysine (Lys-1988). Cys-2084 carries the post-translational modification S-nitrosocysteine. Residues 2112 to 2192 (HGDGDTQRDL…EMSSKTDSAT (81 aa)) form the Carrier domain. Residue Ser-2150 is modified to O-(pantetheine 4'-phosphoryl)serine; alternate. At Ser-2150 the chain carries Phosphoserine; alternate. Positions 2181–2205 (LQEMSSKTDSATDTTAPKSRSDTSL) are disordered. A compositionally biased stretch (low complexity) spans 2185–2198 (SSKTDSATDTTAPK). Residues Ser-2190 and Ser-2229 each carry the phosphoserine modification. The interval 2201 to 2504 (SDTSLKQNQL…AEPRVSVREG (304 aa)) is thioesterase. Residue Ser-2301 is the For thioesterase activity of the active site. Lys-2384 carries the post-translational modification N6-acetyllysine. A Glycyl lysine isopeptide (Lys-Gly) (interchain with G-Cter in SUMO2) cross-link involves residue Lys-2442. His-2474 acts as the For thioesterase activity in catalysis.

As to quaternary structure, homodimer which is arranged in a head to tail fashion. Interacts with CEACAM1; this interaction is insulin and phosphorylation-dependent; reduces fatty-acid synthase activity. S-nitrosylation of Fatty acid synthase at cysteine residues Cys-1464 or Cys-2084 is important for the enzyme dimerization. In adipocytes, S-nitrosylation of Fatty acid synthase occurs under physiological conditions and gradually increases during adipogenesis.

The protein localises to the cytoplasm. Its subcellular location is the melanosome. It carries out the reaction acetyl-CoA + n malonyl-CoA + 2n NADPH + 2n H(+) = a long-chain fatty acid + (n+1) CoA + n CO2 + 2n NADP(+).. The enzyme catalyses holo-[ACP] + acetyl-CoA = acetyl-[ACP] + CoA. The catalysed reaction is holo-[ACP] + malonyl-CoA = malonyl-[ACP] + CoA. It catalyses the reaction a fatty acyl-[ACP] + malonyl-[ACP] + H(+) = a 3-oxoacyl-[ACP] + holo-[ACP] + CO2. It carries out the reaction a (3R)-hydroxyacyl-[ACP] + NADP(+) = a 3-oxoacyl-[ACP] + NADPH + H(+). The enzyme catalyses a (3R)-hydroxyacyl-[ACP] = a (2E)-enoyl-[ACP] + H2O. The catalysed reaction is a 2,3-saturated acyl-[ACP] + NADP(+) = a (2E)-enoyl-[ACP] + NADPH + H(+). It catalyses the reaction hexadecanoyl-[ACP] + H2O = hexadecanoate + holo-[ACP] + H(+). It carries out the reaction acetyl-[ACP] + malonyl-[ACP] + H(+) = 3-oxobutanoyl-[ACP] + holo-[ACP] + CO2. The enzyme catalyses 3-oxobutanoyl-[ACP] + NADPH + H(+) = (3R)-hydroxybutanoyl-[ACP] + NADP(+). The catalysed reaction is (3R)-hydroxybutanoyl-[ACP] = (2E)-butenoyl-[ACP] + H2O. It catalyses the reaction (2E)-butenoyl-[ACP] + NADPH + H(+) = butanoyl-[ACP] + NADP(+). It carries out the reaction butanoyl-[ACP] + malonyl-[ACP] + H(+) = 3-oxohexanoyl-[ACP] + holo-[ACP] + CO2. The enzyme catalyses 3-oxohexanoyl-[ACP] + NADPH + H(+) = (3R)-hydroxyhexanoyl-[ACP] + NADP(+). The catalysed reaction is (3R)-hydroxyhexanoyl-[ACP] = (2E)-hexenoyl-[ACP] + H2O. It catalyses the reaction (2E)-hexenoyl-[ACP] + NADPH + H(+) = hexanoyl-[ACP] + NADP(+). It carries out the reaction hexanoyl-[ACP] + malonyl-[ACP] + H(+) = 3-oxooctanoyl-[ACP] + holo-[ACP] + CO2. The enzyme catalyses 3-oxooctanoyl-[ACP] + NADPH + H(+) = (3R)-hydroxyoctanoyl-[ACP] + NADP(+). The catalysed reaction is (3R)-hydroxyoctanoyl-[ACP] = (2E)-octenoyl-[ACP] + H2O. It catalyses the reaction (2E)-octenoyl-[ACP] + NADPH + H(+) = octanoyl-[ACP] + NADP(+). It carries out the reaction octanoyl-[ACP] + malonyl-[ACP] + H(+) = 3-oxodecanoyl-[ACP] + holo-[ACP] + CO2. The enzyme catalyses 3-oxodecanoyl-[ACP] + NADPH + H(+) = (3R)-hydroxydecanoyl-[ACP] + NADP(+). The catalysed reaction is (3R)-hydroxydecanoyl-[ACP] = (2E)-decenoyl-[ACP] + H2O. It catalyses the reaction (2E)-decenoyl-[ACP] + NADPH + H(+) = decanoyl-[ACP] + NADP(+). It carries out the reaction decanoyl-[ACP] + malonyl-[ACP] + H(+) = 3-oxododecanoyl-[ACP] + holo-[ACP] + CO2. The enzyme catalyses 3-oxododecanoyl-[ACP] + NADPH + H(+) = (3R)-hydroxydodecanoyl-[ACP] + NADP(+). The catalysed reaction is (3R)-hydroxydodecanoyl-[ACP] = (2E)-dodecenoyl-[ACP] + H2O. It catalyses the reaction (2E)-dodecenoyl-[ACP] + NADPH + H(+) = dodecanoyl-[ACP] + NADP(+). It carries out the reaction dodecanoyl-[ACP] + malonyl-[ACP] + H(+) = 3-oxotetradecanoyl-[ACP] + holo-[ACP] + CO2. The enzyme catalyses 3-oxotetradecanoyl-[ACP] + NADPH + H(+) = (3R)-hydroxytetradecanoyl-[ACP] + NADP(+). The catalysed reaction is (3R)-hydroxytetradecanoyl-[ACP] = (2E)-tetradecenoyl-[ACP] + H2O. It catalyses the reaction (2E)-tetradecenoyl-[ACP] + NADPH + H(+) = tetradecanoyl-[ACP] + NADP(+). It carries out the reaction tetradecanoyl-[ACP] + malonyl-[ACP] + H(+) = 3-oxohexadecanoyl-[ACP] + holo-[ACP] + CO2. The enzyme catalyses 3-oxohexadecanoyl-[ACP] + NADPH + H(+) = (3R)-hydroxyhexadecanoyl-[ACP] + NADP(+). The catalysed reaction is (3R)-hydroxyhexadecanoyl-[ACP] = (2E)-hexadecenoyl-[ACP] + H2O. It catalyses the reaction (2E)-hexadecenoyl-[ACP] + NADPH + H(+) = hexadecanoyl-[ACP] + NADP(+). It carries out the reaction hexadecanoyl-[ACP] + malonyl-[ACP] + H(+) = 3-oxooctadecanoyl-[ACP] + holo-[ACP] + CO2. The enzyme catalyses 3-oxooctadecanoyl-[ACP] + NADPH + H(+) = (3R)-hydroxyoctadecanoyl-[ACP] + NADP(+). The catalysed reaction is (3R)-hydroxyoctadecanoyl-[ACP] = (2E)-octadecenoyl-[ACP] + H2O. It catalyses the reaction (2E)-octadecenoyl-[ACP] + NADPH + H(+) = octadecanoyl-[ACP] + NADP(+). It carries out the reaction tetradecanoyl-[ACP] + H2O = tetradecanoate + holo-[ACP] + H(+). It participates in lipid metabolism; fatty acid biosynthesis. In terms of biological role, fatty acid synthetase is a multifunctional enzyme that catalyzes the de novo biosynthesis of long-chain saturated fatty acids starting from acetyl-CoA and malonyl-CoA in the presence of NADPH. This multifunctional protein contains 7 catalytic activities and a site for the binding of the prosthetic group 4'-phosphopantetheine of the acyl carrier protein ([ACP]) domain. In Mus musculus (Mouse), this protein is Fatty acid synthase (Fasn).